The primary structure comprises 300 residues: GTPase Era (300 aa).

The Era-type G domain maps to R8–E176. Residues G16–S23 form a G1 region. G16–S23 is a binding site for GTP. The tract at residues Q42–H46 is G2. The interval D63–G66 is G3. GTP contacts are provided by residues D63 to M67 and N125 to D128. The tract at residues N125–D128 is G4. Residues I155–A157 are G5. The KH type-2 domain occupies V199 to G283.

The protein belongs to the TRAFAC class TrmE-Era-EngA-EngB-Septin-like GTPase superfamily. Era GTPase family. As to quaternary structure, monomer.

It localises to the cytoplasm. Its subcellular location is the cell inner membrane. In terms of biological role, an essential GTPase that binds both GDP and GTP, with rapid nucleotide exchange. Plays a role in 16S rRNA processing and 30S ribosomal subunit biogenesis and possibly also in cell cycle regulation and energy metabolism. The protein is GTPase Era of Pseudomonas fluorescens (strain Pf0-1).